We begin with the raw amino-acid sequence, 138 residues long: uncharacterized protein (138 aa).

3 helical membrane passes run Leu-8 to Pro-28, Phe-47 to Val-67, and Thr-82 to Ile-102.

The protein to U.parvum UU007, UU008 and UU041.

The protein resides in the cell membrane. This is an uncharacterized protein from Ureaplasma parvum serovar 3 (strain ATCC 700970).